The sequence spans 483 residues: Keratin, type II cytoskeletal 7 (483 aa).

Position 2 is an N-acetylserine (Ser-2). Ser-2, Ser-6, and Ser-7 each carry phosphoserine. The segment at 2-107 (SVQFSSQTFS…DPQIQQVRKE (106 aa)) is head. Residue Ser-12 is glycosylated (O-linked (GlcNAc) serine). Residues 14-37 (SAAFPRRGGQGRLSSVSSRAGSVS) form a disordered region. Residue Arg-20 is modified to Dimethylated arginine; alternate. An Omega-N-methylarginine; alternate modification is found at Arg-20. Residues 25-37 (RLSSVSSRAGSVS) are compositionally biased toward low complexity. 2 positions are modified to phosphoserine: Ser-63 and Ser-88. The tract at residues 107–143 (EEREQIKTLNNKFASFIDKVRFLEQQNQMLETKWRLL) is coil 1A. Residues 108 to 420 (EREQIKTLNN…KLLEGEESRL (313 aa)) enclose the IF rod domain. Residue Thr-114 is modified to Phosphothreonine. The linker 1 stretch occupies residues 144 to 161 (QEQKSSKGSSLPAIFEAH). Lys-147 is covalently cross-linked (Glycyl lysine isopeptide (Lys-Gly) (interchain with G-Cter in SUMO2)). The tract at residues 162–253 (IANLRRQLDG…TLYEMELNEL (92 aa)) is coil 1B. Lys-196 carries the N6-acetyllysine modification. The tract at residues 254-277 (QTQISDTSVVLSMDNSRSLDLDSI) is linker 12. A phosphoserine mark is found at Ser-269 and Ser-271. Residues 278-416 (ISEVKAQYED…ATYRKLLEGE (139 aa)) form a coil 2 region. Residues Lys-282 and Lys-303 each participate in a glycyl lysine isopeptide (Lys-Gly) (interchain with G-Cter in SUMO2) cross-link. Position 306 is a phosphothreonine (Thr-306). Glycyl lysine isopeptide (Lys-Gly) (interchain with G-Cter in SUMO2) cross-links involve residues Lys-313 and Lys-348. Positions 417–483 (ESRLSGDGVG…TSSSRRSVRN (67 aa)) are tail.

It belongs to the intermediate filament family. In terms of assembly, heterotetramer of two type I and two type II keratins. Interacts with eukaryotic translation initiator factor 3 (eIF3) subunit EIF3S10. Interacts with GPER1. Post-translationally, arg-20 is dimethylated, probably to asymmetric dimethylarginine.

Blocks interferon-dependent interphase and stimulates DNA synthesis in cells. The protein is Keratin, type II cytoskeletal 7 of Potorous tridactylus (Potoroo).